Reading from the N-terminus, the 222-residue chain is Sugar fermentation stimulation protein homolog (222 aa).

The protein belongs to the SfsA family.

This Thermotoga petrophila (strain ATCC BAA-488 / DSM 13995 / JCM 10881 / RKU-1) protein is Sugar fermentation stimulation protein homolog.